The following is a 387-amino-acid chain: Ubiquitin-conjugating enzyme E2 25 (387 aa).

Residues 117 to 164 (APPVRDDIDEGRGSDISDTTSEPIDDDMAGDGEVDDDDEEEEDDEDAD) form a disordered region. A compositionally biased stretch (basic and acidic residues) spans 120 to 131 (VRDDIDEGRGSD). Residues 139–164 (PIDDDMAGDGEVDDDDEEEEDDEDAD) are compositionally biased toward acidic residues. Residues 214–380 (TATDRLMKEI…QQIHAKSGWY (167 aa)) form the UBC core domain. The active-site Glycyl thioester intermediate is C315.

Belongs to the ubiquitin-conjugating enzyme family. In terms of tissue distribution, in the embryo, expressed in precursor neuron and muscle cells and in other cells such as hypodermal cells. After hatching of L1 larvae and in all subsequent stages, strongest expression in pharyngeal muscle and anal muscle cells. In L4 larvae and adolescent hermaphrodites, also expressed in the vulval muscles. Expression also detected in all four nerve cords and in neurons with weaker levels in all body wall muscles.

It is found in the cytoplasm. The protein resides in the nucleus. It catalyses the reaction S-ubiquitinyl-[E1 ubiquitin-activating enzyme]-L-cysteine + [E2 ubiquitin-conjugating enzyme]-L-cysteine = [E1 ubiquitin-activating enzyme]-L-cysteine + S-ubiquitinyl-[E2 ubiquitin-conjugating enzyme]-L-cysteine.. It functions in the pathway protein modification; protein ubiquitination. Its function is as follows. Catalyzes the covalent attachment of ubiquitin to other proteins (Potential). Required for the maintenance of neuromuscular function. In Caenorhabditis elegans, this protein is Ubiquitin-conjugating enzyme E2 25.